Consider the following 291-residue polypeptide: MTTLAIDIGGTKLAAALIGADGQIRDRRELPTPASQTPEALRDALSALVSPLQAHAQRVAIASTGIIRDGSLLALNPHNLGGLLHFPLVKTLGQLTDLPTIAINDAQAAAWAEYQALEGDITDMVFITVSTGVGGGVVSGGKLLTGPGGLAGHIGHTLADPHGPVCGCGRTGCVEAIASGRGIAAAAQGELAGADAKTIFMRAGQGDEQAQQLIHRSAHVLARLIADIKATTDCQCVVVGGSVGLAEGYLALVETYLAQEPAAFHVDLLAAHYRHDAGLLGAALLAQGEKL.

ATP is bound by residues 5-12 (AIDIGGTK) and 132-139 (GVGGGVVS). Positions 156, 166, 168, and 173 each coordinate Zn(2+).

This sequence belongs to the ROK (NagC/XylR) family. NanK subfamily. As to quaternary structure, homodimer.

It carries out the reaction an N-acyl-D-mannosamine + ATP = an N-acyl-D-mannosamine 6-phosphate + ADP + H(+). The protein operates within amino-sugar metabolism; N-acetylneuraminate degradation; D-fructose 6-phosphate from N-acetylneuraminate: step 2/5. Its function is as follows. Catalyzes the phosphorylation of N-acetylmannosamine (ManNAc) to ManNAc-6-P. The chain is N-acetylmannosamine kinase from Escherichia coli O157:H7.